We begin with the raw amino-acid sequence, 476 residues long: Cysteine--tRNA ligase (476 aa).

Cys-36 is a binding site for Zn(2+). Residues 38-48 carry the 'HIGH' region motif; it reads PTVYDYAHIGN. Zn(2+) is bound by residues Cys-221, His-246, and Glu-250. A 'KMSKS' region motif is present at residues 278 to 282; sequence KMSKS. Residue Lys-281 coordinates ATP.

It belongs to the class-I aminoacyl-tRNA synthetase family. As to quaternary structure, monomer. Requires Zn(2+) as cofactor.

It localises to the cytoplasm. The catalysed reaction is tRNA(Cys) + L-cysteine + ATP = L-cysteinyl-tRNA(Cys) + AMP + diphosphate. The sequence is that of Cysteine--tRNA ligase from Chlamydia felis (strain Fe/C-56) (Chlamydophila felis).